We begin with the raw amino-acid sequence, 893 residues long: Zinc finger protein 281 (893 aa).

Disordered stretches follow at residues 1–113, 126–148, 153–172, and 198–251; these read MKIG…FPSQ, IKQE…HHHY, AGAE…SHGV, and SGSR…GAVL. Residue lysine 2 forms a Glycyl lysine isopeptide (Lys-Gly) (interchain with G-Cter in SUMO2) linkage. The segment covering 7–36 has biased composition (gly residues); it reads FLSGGGGPSSSGGSGSGGSSGSASGGSGGG. Residues lysine 100 and lysine 127 each participate in a glycyl lysine isopeptide (Lys-Gly) (interchain with G-Cter in SUMO2) cross-link. The span at 127-139 shows a compositional bias: basic and acidic residues; the sequence is KQEKPADPEEQPS. Residues 161-170 are compositionally biased toward gly residues; sequence GLGGGEGGSH. Residues 201-216 show a composition bias toward basic and acidic residues; the sequence is RTDEHGNQEPKQDANV. Residues lysine 211, lysine 217, lysine 223, lysine 230, lysine 240, and lysine 256 each participate in a glycyl lysine isopeptide (Lys-Gly) (interchain with G-Cter in SUMO2) cross-link. 3 consecutive C2H2-type zinc fingers follow at residues 258 to 280, 286 to 308, and 314 to 336; these read HICD…VLIH, FQCS…EKIH, and FGCD…KRTH. Residues lysine 298 and lysine 322 each participate in a glycyl lysine isopeptide (Lys-Gly) (interchain with G-Cter in SUMO2) cross-link. The C2H2-type 4; atypical zinc finger occupies 342 to 364; that stretch reads YKCDTCQQYFSRTDRLLKHRRTC. A Glycyl lysine isopeptide (Lys-Gly) (interchain with G-Cter in SUMO2) cross-link involves residue lysine 370. Residues 371–425 are disordered; sequence GAASAEPGSSNHNSMGNLAVLSQGNTSSSRRKSKSKSIAIENKEHKTGKTNESQM. Residues 377 to 396 are compositionally biased toward polar residues; it reads PGSSNHNSMGNLAVLSQGNT. Phosphoserine is present on serine 392. Residues lysine 406, lysine 413, lysine 457, and lysine 474 each participate in a glycyl lysine isopeptide (Lys-Gly) (interchain with G-Cter in SUMO2) cross-link. Phosphoserine is present on serine 481. Glycyl lysine isopeptide (Lys-Gly) (interchain with G-Cter in SUMO2) cross-links involve residues lysine 490, lysine 495, lysine 536, lysine 596, lysine 614, and lysine 619. A disordered region spans residues 613 to 658; it reads GKSETQKEDPFNLTEPRVDLHTSGEHSELVQEENLSPGTQTPSNDK. Basic and acidic residues predominate over residues 616–641; it reads ETQKEDPFNLTEPRVDLHTSGEHSEL. Polar residues predominate over residues 645-658; the sequence is ENLSPGTQTPSNDK. Position 648 is a phosphoserine (serine 648). Residues lysine 658 and lysine 667 each participate in a glycyl lysine isopeptide (Lys-Gly) (interchain with G-Cter in SUMO2) cross-link. The span at 775-813 shows a compositional bias: polar residues; it reads SSAFQSSSQKLTSQKEQQKNLESSTSFQIPSQELASQID. Residues 775–815 form a disordered region; it reads SSAFQSSSQKLTSQKEQQKNLESSTSFQIPSQELASQIDPQ. Serine 782 bears the Phosphoserine mark. Glycyl lysine isopeptide (Lys-Gly) (interchain with G-Cter in SUMO2) cross-links involve residues lysine 784, lysine 789, and lysine 793. Serine 805 is subject to Phosphoserine. Glycyl lysine isopeptide (Lys-Gly) (interchain with G-Cter in SUMO2) cross-links involve residues lysine 816 and lysine 838. Threonine 886 is subject to Phosphothreonine.

This sequence belongs to the krueppel C2H2-type zinc-finger protein family. In terms of assembly, interacts with NANOG. Associates with the NuRD complex.

It localises to the nucleus. Its function is as follows. Transcription repressor that plays a role in regulation of embryonic stem cells (ESCs) differentiation. Required for ESCs differentiation and acts by mediating autorepression of NANOG in ESCs: binds to the NANOG promoter and promotes association of NANOG protein to its own promoter and recruits the NuRD complex, which deacetylates histones. Not required for establishement and maintenance of ESCs. Represses the transcription of a number of genes including GAST, ODC1 and VIM. Binds to the G-rich box in the enhancer region of these genes. This chain is Zinc finger protein 281 (Znf281), found in Mus musculus (Mouse).